The sequence spans 247 residues: tRNA (guanine-N(1)-)-methyltransferase (247 aa).

Residues Gly112 and 132–137 (IGDFVL) contribute to the S-adenosyl-L-methionine site.

Belongs to the RNA methyltransferase TrmD family. Homodimer.

The protein resides in the cytoplasm. It carries out the reaction guanosine(37) in tRNA + S-adenosyl-L-methionine = N(1)-methylguanosine(37) in tRNA + S-adenosyl-L-homocysteine + H(+). In terms of biological role, specifically methylates guanosine-37 in various tRNAs. The protein is tRNA (guanine-N(1)-)-methyltransferase of Geotalea uraniireducens (strain Rf4) (Geobacter uraniireducens).